The sequence spans 266 residues: Putative carbamate hydrolase RutD (266 aa).

The protein belongs to the AB hydrolase superfamily. Hydrolase RutD family.

The enzyme catalyses carbamate + 2 H(+) = NH4(+) + CO2. Functionally, involved in pyrimidine catabolism. May facilitate the hydrolysis of carbamate, a reaction that can also occur spontaneously. The polypeptide is Putative carbamate hydrolase RutD (Escherichia coli O111:H- (strain 11128 / EHEC)).